The primary structure comprises 543 residues: CTP synthase (543 aa).

Residues 1–265 form an amidoligase domain region; that stretch reads MARYIFITGG…DEEVLAAFGI (265 aa). Residue Ser13 coordinates CTP. Ser13 is a binding site for UTP. Residue 14–19 coordinates ATP; the sequence is SLGKGL. An L-glutamine-binding site is contributed by Tyr54. An ATP-binding site is contributed by Asp71. Asp71 and Glu139 together coordinate Mg(2+). Residues 146 to 148, 186 to 191, and Lys222 contribute to the CTP site; these read DIE and KTKPTQ. Residues 186 to 191 and Lys222 each bind UTP; that span reads KTKPTQ. 238–240 provides a ligand contact to ATP; that stretch reads RDA. The 252-residue stretch at 291–542 folds into the Glutamine amidotransferase type-1 domain; sequence TIAIVGKYTG…IEAAMAQSRL (252 aa). Residue Gly353 participates in L-glutamine binding. Cys380 acts as the Nucleophile; for glutamine hydrolysis in catalysis. L-glutamine contacts are provided by residues 381 to 384, Glu404, and Arg470; that span reads FGMQ. Active-site residues include His515 and Glu517.

The protein belongs to the CTP synthase family. In terms of assembly, homotetramer.

The enzyme catalyses UTP + L-glutamine + ATP + H2O = CTP + L-glutamate + ADP + phosphate + 2 H(+). The catalysed reaction is L-glutamine + H2O = L-glutamate + NH4(+). It carries out the reaction UTP + NH4(+) + ATP = CTP + ADP + phosphate + 2 H(+). Its pathway is pyrimidine metabolism; CTP biosynthesis via de novo pathway; CTP from UDP: step 2/2. With respect to regulation, allosterically activated by GTP, when glutamine is the substrate; GTP has no effect on the reaction when ammonia is the substrate. The allosteric effector GTP functions by stabilizing the protein conformation that binds the tetrahedral intermediate(s) formed during glutamine hydrolysis. Inhibited by the product CTP, via allosteric rather than competitive inhibition. Functionally, catalyzes the ATP-dependent amination of UTP to CTP with either L-glutamine or ammonia as the source of nitrogen. Regulates intracellular CTP levels through interactions with the four ribonucleotide triphosphates. This chain is CTP synthase, found in Rhodopseudomonas palustris (strain BisA53).